The primary structure comprises 345 residues: UDP-3-O-acylglucosamine N-acyltransferase (345 aa).

His237 functions as the Proton acceptor in the catalytic mechanism.

It belongs to the transferase hexapeptide repeat family. LpxD subfamily. In terms of assembly, homotrimer.

The enzyme catalyses a UDP-3-O-[(3R)-3-hydroxyacyl]-alpha-D-glucosamine + a (3R)-hydroxyacyl-[ACP] = a UDP-2-N,3-O-bis[(3R)-3-hydroxyacyl]-alpha-D-glucosamine + holo-[ACP] + H(+). The protein operates within bacterial outer membrane biogenesis; LPS lipid A biosynthesis. Its function is as follows. Catalyzes the N-acylation of UDP-3-O-acylglucosamine using 3-hydroxyacyl-ACP as the acyl donor. Is involved in the biosynthesis of lipid A, a phosphorylated glycolipid that anchors the lipopolysaccharide to the outer membrane of the cell. This Geobacter sp. (strain M21) protein is UDP-3-O-acylglucosamine N-acyltransferase.